Consider the following 382-residue polypeptide: S-adenosylmethionine synthase (382 aa).

A Mg(2+)-binding site is contributed by Glu-10. His-16 lines the ATP pocket. Position 44 (Glu-44) interacts with K(+). Residues Glu-57 and Gln-100 each contribute to the L-methionine site. Residues 166 to 168 (DTK), 234 to 237 (SGRF), Asp-245, 251 to 252 (RK), Ala-268, Lys-272, and Lys-276 each bind ATP. Asp-245 is an L-methionine binding site. Lys-276 provides a ligand contact to L-methionine.

The protein belongs to the AdoMet synthase family. The cofactor is Mg(2+). Requires K(+) as cofactor.

The catalysed reaction is L-methionine + ATP + H2O = S-adenosyl-L-methionine + phosphate + diphosphate. It functions in the pathway amino-acid biosynthesis; S-adenosyl-L-methionine biosynthesis; S-adenosyl-L-methionine from L-methionine: step 1/1. In terms of biological role, catalyzes the formation of S-adenosylmethionine from methionine and ATP. The reaction comprises two steps that are both catalyzed by the same enzyme: formation of S-adenosylmethionine (AdoMet) and triphosphate, and subsequent hydrolysis of the triphosphate. The sequence is that of S-adenosylmethionine synthase (sam1) from Schizosaccharomyces pombe (strain 972 / ATCC 24843) (Fission yeast).